A 304-amino-acid chain; its full sequence is MNQNKNYRVLFSNLYKDTQMQENAKMSEHINFRVGGPVDILLTPNTKEQIVETINICKENKIPFYVLGNGSNVLVKDSGIRGVVIKLSEFDNIVRDGNTIKAESGALLKDVSAEALKASLTGFEFACGIPGSVGGAVFMNAGAYDGEISFVIKEAEVMSEDGKIITLSKDQLELGYRTSAIMKKNYIVITATFCFESGEKDKIEGRVSELTNKREEKQPLEFPSAGSTFKRPEGHFAGKLIQDAGLKDFTLGGAAVSGKHCGFIINKSNATAKDILDLIEYIQKEVKKQFGVDLYPEVRIIGED.

The FAD-binding PCMH-type domain maps to 33-198 (RVGGPVDILL…ITATFCFESG (166 aa)). Residue Arg177 is part of the active site. The active-site Proton donor is the Ser227. Glu297 is a catalytic residue.

The protein belongs to the MurB family. Requires FAD as cofactor.

It localises to the cytoplasm. The catalysed reaction is UDP-N-acetyl-alpha-D-muramate + NADP(+) = UDP-N-acetyl-3-O-(1-carboxyvinyl)-alpha-D-glucosamine + NADPH + H(+). The protein operates within cell wall biogenesis; peptidoglycan biosynthesis. In terms of biological role, cell wall formation. This Clostridium botulinum (strain Eklund 17B / Type B) protein is UDP-N-acetylenolpyruvoylglucosamine reductase.